The chain runs to 96 residues: Carboxysome shell protein CsoS1A (96 aa).

A BMC domain is found at 7–92; it reads ALGMIETRGL…PHKEVEPVLT (86 aa).

The protein belongs to the bacterial microcompartments protein family. CsoS1 subfamily. As to quaternary structure, homohexamer with a small central pore. Forms a CsoS2-CsoS1-RuBisCO complex.

It is found in the carboxysome. One of shell proteins of the carboxysome, a polyhedral inclusion where RuBisCO (ribulose bisphosphate carboxylase, ccbL-ccbS) is sequestered. Assembles into hexamers which make sheets that form the facets of the polyhedral carboxysome. The shell probably limits the diffusion of CO(2) into and out of the carboxysome. The polypeptide is Carboxysome shell protein CsoS1A (Hydrogenovibrio crunogenus (strain DSM 25203 / XCL-2) (Thiomicrospira crunogena)).